Here is a 202-residue protein sequence, read N- to C-terminus: LexA repressor (202 aa).

The H-T-H motif DNA-binding region spans 28–48 (RAEIAQRLGFRSPNAAEEHLK). Active-site for autocatalytic cleavage activity residues include Ser119 and Lys156.

It belongs to the peptidase S24 family. As to quaternary structure, homodimer.

The catalysed reaction is Hydrolysis of Ala-|-Gly bond in repressor LexA.. In terms of biological role, represses a number of genes involved in the response to DNA damage (SOS response), including recA and lexA. Binds to the 16 bp palindromic sequence 5'-CTGTATATATATACAG-3'. In the presence of single-stranded DNA, RecA interacts with LexA causing an autocatalytic cleavage which disrupts the DNA-binding part of LexA, leading to derepression of the SOS regulon and eventually DNA repair. The protein is LexA repressor of Escherichia coli (strain K12 / MC4100 / BW2952).